We begin with the raw amino-acid sequence, 2431 residues long: Reducing polyketide synthase rads1 (2431 aa).

The Ketosynthase family 3 (KS3) domain occupies 10–440; sequence RAPIAIIGLA…GTNAHIVLER (431 aa). Active-site for beta-ketoacyl synthase activity residues include C184, H319, and H363. The interval 558–895 is malonyl-CoA:ACP transacylase (MAT) domain; it reads FVFTGQGAQW…NLAAELFRRG (338 aa). An N-terminal hotdog fold region spans residues 944–1080; it reads KSILGAELPS…GLISIAYEDT (137 aa). Positions 944 to 1267 constitute a PKS/mFAS DH domain; it reads KSILGAELPS…LAELEVDDAA (324 aa). The dehydratase (DH) domain stretch occupies residues 946–1264; that stretch reads ILGAELPSMD…DFRLAELEVD (319 aa). H976 acts as the Proton acceptor; for dehydratase activity in catalysis. Residues 1108–1267 are C-terminal hotdog fold; sequence PETCSKERFY…LAELEVDDAA (160 aa). Residue D1174 is the Proton donor; for dehydratase activity of the active site. Residues 1705 to 2023 are enoyl reductase (ER) domain; the sequence is GLLNTLHFVP…QGKHLGKMIL (319 aa). C1822 serves as the catalytic Phosphocysteine intermediate. Residues 2048–2228 form a ketoreductase (KR) domain region; it reads ATYLIVGGLG…VSVNLGIMRD (181 aa). Residues 2346 to 2423 form the Carrier domain; the sequence is VAAAIITEAL…TFAVQIAKKS (78 aa). At S2383 the chain carries O-(pantetheine 4'-phosphoryl)serine.

It functions in the pathway secondary metabolite biosynthesis. Functionally, reducing polyketide synthase; part of the gene cluster that mediates the biosynthesis of radicicol, a resorcylic acid lactone (RAL) that irreversibly inhibits the HSP90 molecular chaperone, an important target for cancer chemotherapy. The cluster encodes only two apparent post-PKS enzymes, a cytochrome P450 monooxygenase (radP) and a non-heme halogenase (radH) that introduce the epoxide and the chlorine, respectively. If this cluster includes all the genes required for radicicol biosynthesis, the remaining structural features of radicicol are presumably generated by the PKSs rads1 and rads2. The C-2' ketone could arise if the R-PKS rads1 and NR-PKS rads2 each carry out four iterations, in contrast to the five iteration-three iteration split for the hypothemycin PKSs. The origin of the cis 5',6' double bond is not known. The radicicol R-PKS radS1 ER domain may catalyze either double bond isomerization or reduction in the third iteration. This Floropilus chiversii (Chaetomium chiversii) protein is Reducing polyketide synthase rads1.